Reading from the N-terminus, the 270-residue chain is 3-methyl-2-oxobutanoate hydroxymethyltransferase (270 aa).

Asp-50 and Asp-89 together coordinate Mg(2+). Residues 50 to 51 (DS), Asp-89, and Lys-118 contribute to the 3-methyl-2-oxobutanoate site. Residue Glu-120 participates in Mg(2+) binding. Glu-187 acts as the Proton acceptor in catalysis.

The protein belongs to the PanB family. Homodecamer; pentamer of dimers. The cofactor is Mg(2+).

The protein resides in the cytoplasm. The enzyme catalyses 3-methyl-2-oxobutanoate + (6R)-5,10-methylene-5,6,7,8-tetrahydrofolate + H2O = 2-dehydropantoate + (6S)-5,6,7,8-tetrahydrofolate. It participates in cofactor biosynthesis; (R)-pantothenate biosynthesis; (R)-pantoate from 3-methyl-2-oxobutanoate: step 1/2. In terms of biological role, catalyzes the reversible reaction in which hydroxymethyl group from 5,10-methylenetetrahydrofolate is transferred onto alpha-ketoisovalerate to form ketopantoate. The protein is 3-methyl-2-oxobutanoate hydroxymethyltransferase of Helicobacter pylori (strain Shi470).